Consider the following 383-residue polypeptide: Mannan endo-1,4-beta-mannosidase (383 aa).

An N-terminal signal peptide occupies residues 1-35; sequence MRNARSTLITTAGMAFAVLGLLFALAGPSAGRAEA. In terms of domain architecture, CBM10 spans 339 to 377; that stretch reads GGSTGGTAPNGYPYCVNGGASDPDGDGWGWENSRSCVVR.

Belongs to the glycosyl hydrolase 5 (cellulase A) family. Monomer.

The catalysed reaction is Random hydrolysis of (1-&gt;4)-beta-D-mannosidic linkages in mannans, galactomannans and glucomannans.. The chain is Mannan endo-1,4-beta-mannosidase (manA) from Streptomyces lividans.